A 647-amino-acid polypeptide reads, in one-letter code: Replication protein E1 (647 aa).

Positions 86-88 match the Nuclear localization signal motif; the sequence is KRK. Ser92 bears the Phosphoserine; by host mark. Residues 154-186 are disordered; it reads TNGDAEGEHGGSVREECSSVDSAIDSENQDPKS. The segment covering 159–170 has biased composition (basic and acidic residues); it reads EGEHGGSVREEC. Residues 183–349 are DNA-binding region; sequence DPKSPTAQIK…LTVIQHGIDD (167 aa). Residues 448–598 form the SF3 helicase domain; it reads IEFISFLCAL…FPFDQNRNPV (151 aa). 474–481 lines the ATP pocket; it reads GPANTGKS. A Glycyl lysine isopeptide (Lys-Gly) (interchain with G-Cter in SUMO) cross-link involves residue Lys555.

Belongs to the papillomaviridae E1 protein family. In terms of assembly, can form hexamers. Interacts with E2 protein; this interaction increases E1 DNA binding specificity. Interacts with host DNA polymerase subunit POLA2. Interacts with host single stranded DNA-binding protein RPA1. Interacts with host TOP1; this interaction stimulates the enzymatic activity of TOP1. In terms of processing, phosphorylated. Post-translationally, sumoylated.

It localises to the host nucleus. The enzyme catalyses Couples ATP hydrolysis with the unwinding of duplex DNA by translocating in the 3'-5' direction.. The catalysed reaction is ATP + H2O = ADP + phosphate + H(+). In terms of biological role, ATP-dependent DNA 3'-5' helicase required for initiation of viral DNA replication. It forms a complex with the viral E2 protein. The E1-E2 complex binds to the replication origin which contains binding sites for both proteins. During the initial step, a dimer of E1 interacts with a dimer of protein E2 leading to a complex that binds the viral origin of replication with high specificity. Then, a second dimer of E1 displaces the E2 dimer in an ATP-dependent manner to form the E1 tetramer. Following this, two E1 monomers are added to each half of the site, which results in the formation of two E1 trimers on the viral ori. Subsequently, two hexamers will be created. The double hexamer acts as a bi-directional helicase machinery and unwinds the viral DNA and then recruits the host DNA polymerase to start replication. This Human papillomavirus 39 protein is Replication protein E1.